The primary structure comprises 196 residues: 3-dehydroquinate dehydratase (196 aa).

3-dehydroquinate contacts are provided by residues 23–25 and R45; that span reads ELR. Catalysis depends on H98, which acts as the Proton donor/acceptor. K122 serves as the catalytic Schiff-base intermediate with substrate. R159 and Q182 together coordinate 3-dehydroquinate.

Belongs to the type-I 3-dehydroquinase family. As to quaternary structure, homodimer.

The enzyme catalyses 3-dehydroquinate = 3-dehydroshikimate + H2O. It functions in the pathway metabolic intermediate biosynthesis; chorismate biosynthesis; chorismate from D-erythrose 4-phosphate and phosphoenolpyruvate: step 3/7. Functionally, involved in the third step of the chorismate pathway, which leads to the biosynthesis of aromatic amino acids. Catalyzes the cis-dehydration of 3-dehydroquinate (DHQ) and introduces the first double bond of the aromatic ring to yield 3-dehydroshikimate. The sequence is that of 3-dehydroquinate dehydratase from Archaeoglobus fulgidus (strain ATCC 49558 / DSM 4304 / JCM 9628 / NBRC 100126 / VC-16).